The sequence spans 763 residues: MPPIPSLWIRVFFSWLLLSLPAAAAADFSHCGGCDDGDGGGGIWSTDNILQCQRVSDFLIAMAYFSIPLELLYFATCSDLFPLKWIVLQFGAFIVLCGLTHLITMFTYEPHSFHVVLALTVAKFLTALVSFATAITLLTLIPQLLRVKVRENFLRIKARELDREVGMMKRQEEASWHVRMLTHEIRKSLDRHTILYTTMVELSKTLELQNCAVWMPSESGSEMILTHQLRQMETEDSNSLSIAMDNPDVLEIKATKDAKVLAADSALGIASRGKLEAGPVAAIRMPMLKASNFKGGTPEVMETSYAILVLVLPEDGSLGWGEEELEIVEVVADQVAVALSHAAVLEESQLMREKLAAQHRDLLRAKHETTMATEARNSFQTAMYDGMRRPMHSILGLVSMMQQENMNPEQRLVMDAIVKTSSVASTLMNDVMQTSTVNREYLSLVRRAFNLHSLVKEAISVVRCLTGCKGIDFEFEVDNSLPERVVGDEKRVFHIVLHMVGTLIQRCNAGCLSLYVNTYNEKEERHNQDWMLRRANFSGSYVCVKFEIRIRESRGNLLSSSSSRRLQGPNSTSSEMGLSFNMCKKIVQMMNGNIWSVSDSKGLGETIMLALQFQLQHVTPVSGASSDLFRSAPIPNFNGLQVILVDSDDTNRAVTHKLLEKLGCLVLSVTSGIQCINSFASAESSFQLVVLDLTMRTMDGFDVALAIRKFRGNCWPPLIVALAASTDDTVRDRCQQAGINGLIQKPVTLAALGDELYRVLQNN.

3 helical membrane passes run 58–78, 86–106, and 115–135; these read FLIA…ATCS, IVLQ…ITMF, and VVLA…ATAI. Cu cation contacts are provided by cysteine 97 and histidine 101. The region spanning 190–339 is the GAF domain; the sequence is DRHTILYTTM…VVADQVAVAL (150 aa). Residues 382 to 615 form the Histidine kinase domain; the sequence is AMYDGMRRPM…TIMLALQFQL (234 aa). Positions 641–760 constitute a Response regulatory domain; that stretch reads QVILVDSDDT…ALGDELYRVL (120 aa). 4-aspartylphosphate is present on aspartate 692.

Belongs to the ethylene receptor family. Requires Cu cation as cofactor. Post-translationally, autophosphorylated on serine, threonine and tyrosine residues.

The protein resides in the endoplasmic reticulum membrane. The enzyme catalyses ATP + protein L-histidine = ADP + protein N-phospho-L-histidine.. Its function is as follows. Ethylene receptor related to bacterial two-component regulators. Acts as a negative regulator of ethylene signaling. May delay the transition from the vegetative stage to the floral stage by up-regulating GI (GIGANTEA) and RCN1 and cause starch accumulation in stems by down-regulating the alpha-amylase AMY3D. The protein is Ethylene receptor 2 of Oryza sativa subsp. japonica (Rice).